We begin with the raw amino-acid sequence, 257 residues long: Glucose-1-phosphate cytidylyltransferase (257 aa).

Residues 6 to 10 (LAGGL), 11 to 13 (GTR), lysine 23, serine 104, arginine 109, and glycine 128 each bind substrate. Residues aspartate 129 and aspartate 234 each coordinate Mg(2+).

The protein belongs to the glucose-1-phosphate cytidylyltransferase family. Homohexamer. Requires Mg(2+) as cofactor.

The enzyme catalyses alpha-D-glucose 1-phosphate + CTP + H(+) = CDP-D-glucose + diphosphate. It functions in the pathway nucleotide-sugar biosynthesis; CDP-3,6-dideoxy-D-mannose biosynthesis; CDP-3,6-dideoxy-D-mannose from CTP and alpha-D-glucose 1-phosphate: step 1/5. The protein operates within bacterial outer membrane biogenesis; LPS O-antigen biosynthesis. In terms of biological role, involved in the biosynthesis of the tyvelose, a 3,6-dideoxyhexose found in the O-antigen of the surface lipopolysaccharides. It catalyzes the transfer of a CMP moiety from CTP to glucose 1-phosphate. This enzyme can utilize either CTP or UTP as the nucleotide donor. In Salmonella typhi, this protein is Glucose-1-phosphate cytidylyltransferase (rfbF).